The primary structure comprises 542 residues: Prolyl 3-hydroxylase OGFOD1 (542 aa).

The region spanning 134 to 239 (DLESTIDMSC…RLSISGWFHG (106 aa)) is the Fe2OG dioxygenase domain. Fe cation contacts are provided by H155 and D157. Y169 lines the 2-oxoglutarate pocket. H218 contacts Fe cation. R230 provides a ligand contact to 2-oxoglutarate. The interval 373 to 435 (EDEMNDKKEA…TKKESSVPTC (63 aa)) is disordered. The segment covering 400–416 (ENNQTAISNNSQQSNEQ) has biased composition (polar residues).

The protein belongs to the TPA1 family. In terms of assembly, monomer. Requires Fe(2+) as cofactor. It depends on L-ascorbate as a cofactor.

It is found in the cytoplasm. Its subcellular location is the nucleus. The enzyme catalyses [ribosomal protein uS12]-L-proline + 2-oxoglutarate + O2 = [ribosomal protein uS12]-(3S)-3-hydroxy-L-proline + succinate + CO2. In terms of biological role, prolyl 3-hydroxylase that catalyzes 3-hydroxylation of 'Pro-62' of small ribosomal subunit uS12 (RPS23), thereby regulating protein translation termination efficiency. Involved in stress granule formation. This is Prolyl 3-hydroxylase OGFOD1 (OGFOD1) from Pongo abelii (Sumatran orangutan).